A 280-amino-acid chain; its full sequence is Putative pyruvate, phosphate dikinase regulatory protein (280 aa).

Position 147-154 (147-154 (GASRSSKT)) interacts with ADP.

This sequence belongs to the pyruvate, phosphate/water dikinase regulatory protein family. PDRP subfamily.

The catalysed reaction is N(tele)-phospho-L-histidyl/L-threonyl-[pyruvate, phosphate dikinase] + ADP = N(tele)-phospho-L-histidyl/O-phospho-L-threonyl-[pyruvate, phosphate dikinase] + AMP + H(+). It catalyses the reaction N(tele)-phospho-L-histidyl/O-phospho-L-threonyl-[pyruvate, phosphate dikinase] + phosphate + H(+) = N(tele)-phospho-L-histidyl/L-threonyl-[pyruvate, phosphate dikinase] + diphosphate. Functionally, bifunctional serine/threonine kinase and phosphorylase involved in the regulation of the pyruvate, phosphate dikinase (PPDK) by catalyzing its phosphorylation/dephosphorylation. The chain is Putative pyruvate, phosphate dikinase regulatory protein from Pelobacter propionicus (strain DSM 2379 / NBRC 103807 / OttBd1).